The following is a 201-amino-acid chain: Peptidyl-tRNA hydrolase (201 aa).

Tyrosine 14 lines the tRNA pocket. The active-site Proton acceptor is histidine 19. TRNA contacts are provided by phenylalanine 64, asparagine 66, and asparagine 112.

This sequence belongs to the PTH family. Monomer.

It localises to the cytoplasm. It carries out the reaction an N-acyl-L-alpha-aminoacyl-tRNA + H2O = an N-acyl-L-amino acid + a tRNA + H(+). In terms of biological role, hydrolyzes ribosome-free peptidyl-tRNAs (with 1 or more amino acids incorporated), which drop off the ribosome during protein synthesis, or as a result of ribosome stalling. Its function is as follows. Catalyzes the release of premature peptidyl moieties from peptidyl-tRNA molecules trapped in stalled 50S ribosomal subunits, and thus maintains levels of free tRNAs and 50S ribosomes. The sequence is that of Peptidyl-tRNA hydrolase from Rhodopseudomonas palustris (strain BisA53).